Consider the following 157-residue polypeptide: Protein FAM218A (157 aa).

Residues 104 to 127 are disordered; it reads PAVTPPKLPGHSKSEGPPGKVRKR.

The chain is Protein FAM218A (FAM218A) from Homo sapiens (Human).